A 150-amino-acid polypeptide reads, in one-letter code: MSLQFNPIGLFLVALILLGVLGNNNSITISATLLLLMQQTALNKYIPMLEKYGLTIGIIILTIGVLSPIVSGKINLPNLSEILSWKMALAISIGIFVAWLGGRGINLMATQPLIITGLLIGTIIGIAFFGGIPVGPLIAAGIMSLLVGKL.

A run of 4 helical transmembrane segments spans residues 1-21 (MSLQFNPIGLFLVALILLGVL), 52-72 (YGLTIGIIILTIGVLSPIVSG), 82-102 (ILSWKMALAISIGIFVAWLGG), and 114-134 (IITGLLIGTIIGIAFFGGIPV).

Belongs to the UPF0756 family.

It is found in the cell membrane. The sequence is that of UPF0756 membrane protein HD_1071 from Haemophilus ducreyi (strain 35000HP / ATCC 700724).